A 1176-amino-acid polypeptide reads, in one-letter code: DNA-directed RNA polymerase subunit beta (1176 aa).

Polar residues predominate over residues 13-30 (TDASLHQGRPQSSSNSSV). A disordered region spans residues 13–35 (TDASLHQGRPQSSSNSSVPGAPN).

The protein belongs to the RNA polymerase beta chain family. The RNAP catalytic core consists of 2 alpha, 1 beta, 1 beta' and 1 omega subunit. When a sigma factor is associated with the core the holoenzyme is formed, which can initiate transcription.

It catalyses the reaction RNA(n) + a ribonucleoside 5'-triphosphate = RNA(n+1) + diphosphate. DNA-dependent RNA polymerase catalyzes the transcription of DNA into RNA using the four ribonucleoside triphosphates as substrates. The protein is DNA-directed RNA polymerase subunit beta of Mycobacterium marinum (strain ATCC BAA-535 / M).